Here is a 428-residue protein sequence, read N- to C-terminus: Palmitoyltransferase pfa4 (428 aa).

Residues 1 to 10 (MLCRSFNISQ) lie on the Cytoplasmic side of the membrane. Residues 11–31 (LAIPFVSVLISFLAYTSQLFF) traverse the membrane as a helical segment. The Lumenal segment spans residues 32-43 (YYFEEAPLRSEE). Residues 44–61 (FWRLNIFAVCIWVCYYRA) traverse the membrane as a helical segment. The Cytoplasmic segment spans residues 62–134 (CTVDPGRIPK…SNCVSHFTYP (73 aa)). Residues 91 to 141 (RWCRRCEAFKPPRAHHCKTCQRCIPKMDHHCPWTSNCVSHFTYPHFMRFLF) enclose the DHHC domain. The active-site S-palmitoyl cysteine intermediate is C121. Residues 135–155 (HFMRFLFYAVVGMGYLETLLF) form a helical membrane-spanning segment. Topologically, residues 156–177 (ERASIVWASRHLPSYLGPGLGQ) are lumenal. A helical membrane pass occupies residues 178 to 198 (LVHLFILLVVNSLTWLALFIL). Topologically, residues 199-428 (LLRSIWSLAL…GILMQRRRQQ (230 aa)) are cytoplasmic. The disordered stretch occupies residues 339–400 (QRSNDASHSG…WKNSEGDRLR (62 aa)). A compositionally biased stretch (basic and acidic residues) spans 360–373 (DRFNENKAKERLSE). The segment covering 374 to 388 (SESDFSDDEEVQDGE) has biased composition (acidic residues). Basic and acidic residues predominate over residues 389-400 (EGWKNSEGDRLR).

It belongs to the DHHC palmitoyltransferase family. PFA4 subfamily.

The protein localises to the endoplasmic reticulum membrane. The enzyme catalyses L-cysteinyl-[protein] + hexadecanoyl-CoA = S-hexadecanoyl-L-cysteinyl-[protein] + CoA. Functionally, mediates the reversible addition of palmitate to target proteins, thereby regulating their membrane association and biological function. The protein is Palmitoyltransferase pfa4 of Aspergillus fumigatus (strain ATCC MYA-4609 / CBS 101355 / FGSC A1100 / Af293) (Neosartorya fumigata).